The primary structure comprises 315 residues: Probable mannose-6-phosphate isomerase GmuF (315 aa).

Zn(2+)-binding residues include Gln-95, His-97, Glu-115, and His-172. Arg-192 is an active-site residue.

It belongs to the mannose-6-phosphate isomerase type 1 family. The cofactor is Zn(2+).

It catalyses the reaction D-mannose 6-phosphate = D-fructose 6-phosphate. Functionally, seems to be involved in the degradation of glucomannan. The protein is Probable mannose-6-phosphate isomerase GmuF (gmuF) of Bacillus subtilis (strain 168).